Here is a 79-residue protein sequence, read N- to C-terminus: U-actitoxin-Oulsp1 (79 aa).

Positions 1–21 (MNTKLVVVFLLSAILFVSVTA) are cleaved as a signal peptide. Positions 22-43 (SRPGKDLERDEAYETYDDENKR) are excised as a propeptide. A ShKT domain is found at 45–79 (CKDVFPAATCRHAKSVGNCSSEKYKRNCAITCGAC). 3 disulfides stabilise this stretch: cysteine 45–cysteine 79, cysteine 54–cysteine 72, and cysteine 63–cysteine 76. Positions 67 to 68 (KY) are crucial for binding to potassium channels.

Belongs to the sea anemone type 1 potassium channel toxin family. Type 1b subfamily. In terms of processing, two similar peptides (OspTx2a-p1 and -p2) are obtained after synthesis and oxidative folding. They may differ by a D-Cys at position 76 (corresponding to OspTx2a-p2). Since C-terminal Cys residues are prone to racemization during solid-phase peptide synthesis, and if the presence of a D-amino acid is correct, it is probable that OspTx2a-p1 (L-Cys-76 form) corresponds to the native peptide.

It localises to the secreted. In terms of biological role, toxin that weakly blocks the two voltage-gated potassium channels on Kv1.2/KCNA2 (IC(50)=1.8-2.5 uM) and Kv1.6/KCNA6 (IC(50)=5.6-6.2 uM). This chain is U-actitoxin-Oulsp1, found in Oulactis sp. (Sea anemone).